Here is a 220-residue protein sequence, read N- to C-terminus: Ribonuclease HII (220 aa).

Residues 32-220 form the RNase H type-2 domain; it reads KHIAGIDEAG…FAPIKGCFDC (189 aa). Positions 38, 39, and 130 each coordinate a divalent metal cation.

It belongs to the RNase HII family. Mn(2+) is required as a cofactor. Mg(2+) serves as cofactor.

It is found in the cytoplasm. The catalysed reaction is Endonucleolytic cleavage to 5'-phosphomonoester.. Its function is as follows. Endonuclease that specifically degrades the RNA of RNA-DNA hybrids. This Brucella abortus (strain 2308) protein is Ribonuclease HII.